We begin with the raw amino-acid sequence, 126 residues long: NADH-quinone oxidoreductase subunit A (126 aa).

3 consecutive transmembrane segments (helical) span residues 16 to 36 (ILVLLAMAIGLGLILIAAAAI), 73 to 93 (ILFIIFDLEVAFLFPWAVAFG), and 95 to 115 (MSMTAFWSMMVFLSVLTVGFA).

It belongs to the complex I subunit 3 family. In terms of assembly, NDH-1 is composed of 14 different subunits. Subunits NuoA, H, J, K, L, M, N constitute the membrane sector of the complex.

Its subcellular location is the cell inner membrane. The enzyme catalyses a quinone + NADH + 5 H(+)(in) = a quinol + NAD(+) + 4 H(+)(out). Its function is as follows. NDH-1 shuttles electrons from NADH, via FMN and iron-sulfur (Fe-S) centers, to quinones in the respiratory chain. The immediate electron acceptor for the enzyme in this species is believed to be ubiquinone. Couples the redox reaction to proton translocation (for every two electrons transferred, four hydrogen ions are translocated across the cytoplasmic membrane), and thus conserves the redox energy in a proton gradient. In Rhodobacter capsulatus (Rhodopseudomonas capsulata), this protein is NADH-quinone oxidoreductase subunit A.